A 354-amino-acid chain; its full sequence is Maleylacetate reductase 1 (354 aa).

Belongs to the iron-containing alcohol dehydrogenase family. Homodimer.

The enzyme catalyses 3-oxoadipate + NAD(+) = maleylacetate + NADH + H(+). It carries out the reaction 3-oxoadipate + NADP(+) = maleylacetate + NADPH + H(+). It functions in the pathway aromatic compound metabolism; 3-chlorocatechol degradation. The polypeptide is Maleylacetate reductase 1 (tfdFI) (Cupriavidus pinatubonensis (strain JMP 134 / LMG 1197) (Cupriavidus necator (strain JMP 134))).